We begin with the raw amino-acid sequence, 557 residues long: Potassium-transporting ATPase potassium-binding subunit (557 aa).

Helical transmembrane passes span 5–25 (GFLL…PLGS), 63–83 (LCAI…MLLG), 132–152 (GLTV…FALI), 170–190 (LLRI…LFFI), 253–273 (FVQM…FGEV), 283–303 (LLWA…WAEV), 329–349 (VLVS…AVIA), 356–376 (ALGG…FGGV), 379–399 (GLYG…LMIG), 416–436 (LTAL…ALAM), 484–504 (LLAF…MAIA), and 526–546 (LFVG…FIPA).

Belongs to the KdpA family. In terms of assembly, the system is composed of three essential subunits: KdpA, KdpB and KdpC.

It is found in the cell inner membrane. Part of the high-affinity ATP-driven potassium transport (or Kdp) system, which catalyzes the hydrolysis of ATP coupled with the electrogenic transport of potassium into the cytoplasm. This subunit binds the periplasmic potassium ions and delivers the ions to the membrane domain of KdpB through an intramembrane tunnel. The chain is Potassium-transporting ATPase potassium-binding subunit from Escherichia coli O157:H7.